A 1021-amino-acid polypeptide reads, in one-letter code: Ankyrin repeat- and BTB/POZ domain-containing protein 3-A (1021 aa).

Residues 160–180 (MVLSWTISVNCITAALSALSL) traverse the membrane as a helical segment. ANK repeat units lie at residues 515–544 (QGMT…DINS), 561–590 (RQGT…NVEG), 599–628 (YTET…DPLI), and 642–671 (GEMN…KDKG). Residues 836-902 (SDVTFLVEGK…LYCGGTESLH (67 aa)) enclose the BTB domain.

The protein resides in the membrane. The chain is Ankyrin repeat- and BTB/POZ domain-containing protein 3-A (abtb3a) from Danio rerio (Zebrafish).